A 794-amino-acid chain; its full sequence is Protein transport protein SEC23 G (794 aa).

Zn(2+) is bound by residues C56, C59, C78, and C81. The tract at residues 56–81 (CSRCGAVLNPYARVDYQSRIWSCPFC) is zinc finger-like.

The protein belongs to the SEC23/SEC24 family. SEC23 subfamily. As to quaternary structure, component of the coat protein complex II (COPII), composed of at least five proteins: the Sec23/24 complex, the Sec13/31 complex and Sar1. Interacts with SEC24A.

Its subcellular location is the cytoplasmic vesicle. The protein resides in the COPII-coated vesicle membrane. The protein localises to the endoplasmic reticulum membrane. It localises to the membrane. Its function is as follows. Component of the coat protein complex II (COPII) which promotes the formation of transport vesicles from the endoplasmic reticulum (ER). The coat has two main functions, the physical deformation of the endoplasmic reticulum membrane into vesicles and the selection of cargo molecules. This Arabidopsis thaliana (Mouse-ear cress) protein is Protein transport protein SEC23 G.